The chain runs to 370 residues: Cobalt-precorrin-5B C(1)-methyltransferase (370 aa).

This sequence belongs to the CbiD family.

The enzyme catalyses Co-precorrin-5B + S-adenosyl-L-methionine = Co-precorrin-6A + S-adenosyl-L-homocysteine. The protein operates within cofactor biosynthesis; adenosylcobalamin biosynthesis; cob(II)yrinate a,c-diamide from sirohydrochlorin (anaerobic route): step 6/10. In terms of biological role, catalyzes the methylation of C-1 in cobalt-precorrin-5B to form cobalt-precorrin-6A. The protein is Cobalt-precorrin-5B C(1)-methyltransferase of Prochlorococcus marinus (strain MIT 9215).